Consider the following 565-residue polypeptide: MPAGTKEQIECPLKGVTLLNSPRYNKDTAFTPEERQKFEISSRLPPIVETLQQQVDRCYDQYKAIGDEPLQKNLYLSQLSVTNQTLFYALISQHLIEMIPIIYTPTEGDAIKQFSDIYRYPEGCYLDIDHNDLSYIKQQLSEFGKSDSVEYIIITDSEGILGIGDQGVGGVLISVAKGHLMTLCAGLDPNRFLPIVLDVGTNNETHRKNHQYMGLRKDRVRGEQYDSFLDNVIKAIREVFPEAFIHFEDFGLANAKRILDHYRPDIACFNDDIQGTGAVALAAIIGALHVTKSPLTEQRIMIFGAGTAGVGIANQIVAGMVTDGLSLDKARGNLFMIDRCGLLLERHAKIATDGQKPFLKKDSDFKEVPSGDINLESAIALVKPTILLGCSGQPGKFTEKAIREMSKHVERPIIFPISNPTTLMEAKPDQIDKWSDGKALIATGSPLPPLNRNGKKYVISQCNNALLYPALGVACVLSRCKLLSDGMLKAASDALATVPRSLFAADEALLPDLNNAREISRHIVFAVLKQAVSEGMSTVDLPKDDAKLKEWIIEREWNPEYKPFV.

Tyrosine 103 functions as the Proton donor in the catalytic mechanism. The active-site Proton acceptor is lysine 177. A divalent metal cation-binding residues include glutamate 248, aspartate 249, and aspartate 272. Residues aspartate 272 and asparagine 419 each contribute to the NAD(+) site. Residue serine 445 is modified to Phosphoserine.

The protein belongs to the malic enzymes family. Requires Mg(2+) as cofactor. The cofactor is Mn(2+).

It carries out the reaction (S)-malate + NAD(+) = pyruvate + CO2 + NADH. The catalysed reaction is oxaloacetate + H(+) = pyruvate + CO2. This chain is NAD-dependent malic enzyme (mae2), found in Schizosaccharomyces pombe (strain 972 / ATCC 24843) (Fission yeast).